The sequence spans 380 residues: Cytochrome b (380 aa).

4 helical membrane-spanning segments follow: residues phenylalanine 34–methionine 54, tryptophan 78–isoleucine 99, tryptophan 114–leucine 134, and phenylalanine 179–threonine 199. Heme b-binding residues include histidine 84 and histidine 98. Residues histidine 183 and histidine 197 each coordinate heme b. Residue histidine 202 coordinates a ubiquinone. 4 helical membrane-spanning segments follow: residues isoleucine 227–serine 247, leucine 289–histidine 309, leucine 321–serine 341, and phenylalanine 348–proline 368.

It belongs to the cytochrome b family. In terms of assembly, the cytochrome bc1 complex contains 11 subunits: 3 respiratory subunits (MT-CYB, CYC1 and UQCRFS1), 2 core proteins (UQCRC1 and UQCRC2) and 6 low-molecular weight proteins (UQCRH/QCR6, UQCRB/QCR7, UQCRQ/QCR8, UQCR10/QCR9, UQCR11/QCR10 and a cleavage product of UQCRFS1). This cytochrome bc1 complex then forms a dimer. Requires heme b as cofactor.

It localises to the mitochondrion inner membrane. Functionally, component of the ubiquinol-cytochrome c reductase complex (complex III or cytochrome b-c1 complex) that is part of the mitochondrial respiratory chain. The b-c1 complex mediates electron transfer from ubiquinol to cytochrome c. Contributes to the generation of a proton gradient across the mitochondrial membrane that is then used for ATP synthesis. This is Cytochrome b (MT-CYB) from Vireo olivaceus (Red-eyed vireo).